Reading from the N-terminus, the 99-residue chain is Small ribosomal subunit protein uS19 (99 aa).

Residues 76–99 (PTRSFRGHAGGGKAEKGGSAPRKK) form a disordered region.

This sequence belongs to the universal ribosomal protein uS19 family.

Protein S19 forms a complex with S13 that binds strongly to the 16S ribosomal RNA. The polypeptide is Small ribosomal subunit protein uS19 (Pelodictyon phaeoclathratiforme (strain DSM 5477 / BU-1)).